A 180-amino-acid polypeptide reads, in one-letter code: Large ribosomal subunit protein uL6 (180 aa).

This sequence belongs to the universal ribosomal protein uL6 family. In terms of assembly, part of the 50S ribosomal subunit.

In terms of biological role, this protein binds to the 23S rRNA, and is important in its secondary structure. It is located near the subunit interface in the base of the L7/L12 stalk, and near the tRNA binding site of the peptidyltransferase center. The chain is Large ribosomal subunit protein uL6 from Salinispora arenicola (strain CNS-205).